Reading from the N-terminus, the 277-residue chain is Acetyl-coenzyme A carboxylase carboxyl transferase subunit beta (277 aa).

In terms of domain architecture, CoA carboxyltransferase N-terminal spans 22 to 277 (LWTKCPGCNR…TLKQLLYFLT (256 aa)). Zn(2+)-binding residues include Cys26, Cys29, Cys45, and Cys48. The C4-type zinc-finger motif lies at 26-48 (CPGCNRFLYTKELELNQSVCHYC).

It belongs to the AccD/PCCB family. In terms of assembly, acetyl-CoA carboxylase is a heterohexamer composed of biotin carboxyl carrier protein (AccB), biotin carboxylase (AccC) and two subunits each of ACCase subunit alpha (AccA) and ACCase subunit beta (AccD). Requires Zn(2+) as cofactor.

The protein localises to the cytoplasm. The enzyme catalyses N(6)-carboxybiotinyl-L-lysyl-[protein] + acetyl-CoA = N(6)-biotinyl-L-lysyl-[protein] + malonyl-CoA. Its pathway is lipid metabolism; malonyl-CoA biosynthesis; malonyl-CoA from acetyl-CoA: step 1/1. In terms of biological role, component of the acetyl coenzyme A carboxylase (ACC) complex. Biotin carboxylase (BC) catalyzes the carboxylation of biotin on its carrier protein (BCCP) and then the CO(2) group is transferred by the transcarboxylase to acetyl-CoA to form malonyl-CoA. The chain is Acetyl-coenzyme A carboxylase carboxyl transferase subunit beta from Methylacidiphilum infernorum (isolate V4) (Methylokorus infernorum (strain V4)).